A 228-amino-acid polypeptide reads, in one-letter code: NAD(P)H-hydrate epimerase (228 aa).

Positions 9–215 (AISIDEELFN…RLEEKYSLEL (207 aa)) constitute a YjeF N-terminal domain. Residue 58 to 62 (NNGGD) coordinates (6S)-NADPHX. 2 residues coordinate K(+): Asn59 and Asp123. Residues 127-133 (GFSFKPP) and Asp156 contribute to the (6S)-NADPHX site. K(+) is bound at residue Ser159.

It belongs to the NnrE/AIBP family. The cofactor is K(+).

It catalyses the reaction (6R)-NADHX = (6S)-NADHX. It carries out the reaction (6R)-NADPHX = (6S)-NADPHX. Catalyzes the epimerization of the S- and R-forms of NAD(P)HX, a damaged form of NAD(P)H that is a result of enzymatic or heat-dependent hydration. This is a prerequisite for the S-specific NAD(P)H-hydrate dehydratase to allow the repair of both epimers of NAD(P)HX. The sequence is that of NAD(P)H-hydrate epimerase from Anopheles darlingi (Mosquito).